The following is an 84-amino-acid chain: Large ribosomal subunit protein uL23 (84 aa).

It belongs to the universal ribosomal protein uL23 family. In terms of assembly, part of the 50S ribosomal subunit. Contacts protein L29.

Its function is as follows. Binds to 23S rRNA. One of the proteins that surrounds the polypeptide exit tunnel on the outside of the ribosome. The chain is Large ribosomal subunit protein uL23 from Halobacterium salinarum (strain ATCC 700922 / JCM 11081 / NRC-1) (Halobacterium halobium).